We begin with the raw amino-acid sequence, 288 residues long: Pyridoxal kinase PdxY (288 aa).

Residues Ser-12 and 47–48 (TQ) contribute to the substrate site. ATP is bound by residues Asp-114, Glu-151, Lys-184, and 211–214 (RPLL). Asp-225 provides a ligand contact to substrate.

This sequence belongs to the pyridoxine kinase family. PdxY subfamily. As to quaternary structure, homodimer. Mg(2+) is required as a cofactor.

The enzyme catalyses pyridoxal + ATP = pyridoxal 5'-phosphate + ADP + H(+). Its pathway is cofactor metabolism; pyridoxal 5'-phosphate salvage; pyridoxal 5'-phosphate from pyridoxal: step 1/1. In terms of biological role, pyridoxal kinase involved in the salvage pathway of pyridoxal 5'-phosphate (PLP). Catalyzes the phosphorylation of pyridoxal to PLP. The sequence is that of Pyridoxal kinase PdxY from Pseudomonas savastanoi pv. phaseolicola (strain 1448A / Race 6) (Pseudomonas syringae pv. phaseolicola (strain 1448A / Race 6)).